A 752-amino-acid polypeptide reads, in one-letter code: GTPase-activating protein rrc-1 (752 aa).

Residues 165 to 244 form the SH3 domain; the sequence is PAIAAAVVTK…PRDCVMLIDD (80 aa). Positions 281–463 constitute a Rho-GAP domain; the sequence is LELTELFMRT…FCIENSDSLF (183 aa). 2 disordered regions span residues 523–552 and 582–609; these read STGE…ATFQ and RSMR…GANN.

Functionally, functions as a GTPase-activating protein (GAP) for ced-10/RAC-1 and CDC42. This is GTPase-activating protein rrc-1 from Caenorhabditis briggsae.